We begin with the raw amino-acid sequence, 236 residues long: 2,3,4,5-tetrahydropyridine-2,6-dicarboxylate N-acetyltransferase (236 aa).

The protein belongs to the transferase hexapeptide repeat family. DapH subfamily.

It catalyses the reaction (S)-2,3,4,5-tetrahydrodipicolinate + acetyl-CoA + H2O = L-2-acetamido-6-oxoheptanedioate + CoA. Its pathway is amino-acid biosynthesis; L-lysine biosynthesis via DAP pathway; LL-2,6-diaminopimelate from (S)-tetrahydrodipicolinate (acetylase route): step 1/3. Catalyzes the transfer of an acetyl group from acetyl-CoA to tetrahydrodipicolinate. In Geobacillus kaustophilus (strain HTA426), this protein is 2,3,4,5-tetrahydropyridine-2,6-dicarboxylate N-acetyltransferase.